We begin with the raw amino-acid sequence, 354 residues long: Protein RecA (354 aa).

67–74 contributes to the ATP binding site; that stretch reads GPESSGKT.

It belongs to the RecA family.

The protein resides in the cytoplasm. Its function is as follows. Can catalyze the hydrolysis of ATP in the presence of single-stranded DNA, the ATP-dependent uptake of single-stranded DNA by duplex DNA, and the ATP-dependent hybridization of homologous single-stranded DNAs. It interacts with LexA causing its activation and leading to its autocatalytic cleavage. The sequence is that of Protein RecA from Pasteurella multocida (strain Pm70).